Reading from the N-terminus, the 483-residue chain is Altronate oxidoreductase (483 aa).

Residue 18 to 29 coordinates NAD(+); it reads IIQFGEGNFLRA.

The protein belongs to the mannitol dehydrogenase family. UxaB subfamily.

The catalysed reaction is D-altronate + NAD(+) = keto-D-tagaturonate + NADH + H(+). It participates in carbohydrate metabolism; pentose and glucuronate interconversion. This chain is Altronate oxidoreductase, found in Escherichia coli O1:K1 / APEC.